Consider the following 747-residue polypeptide: Kinesin-like protein KIF3B (747 aa).

M1 is modified (N-acetylmethionine). N-acetylserine; in Kinesin-like protein KIF3B, N-terminally processed is present on S2. A Kinesin motor domain is found at 9 to 340 (SVRVVVRCRP…LRYANRAKNI (332 aa)). Residue 96–103 (GQTGTGKT) coordinates ATP. The stretch at 346–579 (VNEDPKDALL…EQTQNELTRE (234 aa)) forms a coiled coil. Disordered regions lie at residues 374–412 (IGRRKRREKRREGGGSGGGGEEEEEEGEEGEEEGDDKDD) and 699–747 (QVDA…LVPK). Over residues 393–411 (GEEEEEEGEEGEEEGDDKD) the composition is skewed to acidic residues. Positions 580 to 747 (LKLKHLIIEN…YPQSRGLVPK (168 aa)) are globular. A compositionally biased stretch (polar residues) spans 701-710 (DASSFESTAN). The span at 711-721 (KKSKARPKSGR) shows a compositional bias: basic residues. Low complexity predominate over residues 722 to 735 (KSGSSSSSSGTPAS).

Belongs to the TRAFAC class myosin-kinesin ATPase superfamily. Kinesin family. Kinesin II subfamily. As to quaternary structure, heterodimer of KIF3A and KIF3B. KIF3A/KIF3B heterodimer interacts with KIFAP3 forming a heterotrimeric (KIF3A/KIF3B/KIFAP3) complex. Interacts directly with IFT20. Interacts with the SMC3 subunit of the cohesin complex. Interacts with FLCN.

It is found in the cytoplasm. Its subcellular location is the cytoskeleton. It localises to the cell projection. The protein localises to the cilium. The protein resides in the dendritic spine. Its function is as follows. Microtubule-based molecular motor that transport intracellular cargos, such as vesicles, organelles and protein complexes. Uses ATP hydrolysis to generate force to bind and move along the microtubule. Plays a role in cilia formation. Involved in photoreceptor integrity and opsin trafficking in rod photoreceptors. Transports vesicles containing N-methyl-D-aspartate (NMDA) receptor subunit GRIN2A into neuronal dendrites. The polypeptide is Kinesin-like protein KIF3B (KIF3B) (Homo sapiens (Human)).